The chain runs to 404 residues: MSDSKEPRLQQLGLLEEEQLRGLGFRQTRGYKSLAGCLGHGPLVLQLLSFTLLAGLLVQVSKVPSSISQEQSRQDAIYQNLTQLKAAVGELSEKSKLQEIYQELTQLKAAVGELPEKSKLQEIYQELTRLKAAVGELPEKSKLQEIYQELTWLKAAVGELPEKSKMQEIYQELTRLKAAVGELPEKSKQQEIYQELTRLKAAVGELPEKSKQQEIYQELTRLKAAVGELPEKSKQQEIYQELTQLKAAVERLCHPCPWEWTFFQGNCYFMSNSQRNWHDSITACKEVGAQLVVIKSAEEQNFLQLQSSRSNRFTWMGLSDLNQEGTWQWVDGSPLLPSFKQYWNRGEPNNVGEEDCAEFSGNGWNDDKCNLAKFWICKKSAASCSRDEEQFLSPAPATPNPPPA.

Residues 1–37 lie on the Cytoplasmic side of the membrane; the sequence is MSDSKEPRLQQLGLLEEEQLRGLGFRQTRGYKSLAGC. Short sequence motifs (endocytosis signal) lie at residues 14–15, 16–18, and 31–34; these read LL, EEE, and YKSL. The helical; Signal-anchor for type II membrane protein transmembrane segment at 38–58 threads the bilayer; sequence LGHGPLVLQLLSFTLLAGLLV. Topologically, residues 59–404 are extracellular; the sequence is QVSKVPSSIS…APATPNPPPA (346 aa). A glycan (N-linked (GlcNAc...) asparagine) is linked at asparagine 80. A run of 7 repeats spans residues 96 to 118, 119 to 141, 142 to 164, 165 to 187, 188 to 210, 211 to 233, and 234 to 257. The 7 X approximate tandem repeats stretch occupies residues 96–257; it reads KLQEIYQELT…AVERLCHPCP (162 aa). Intrachain disulfides connect cysteine 256/cysteine 267, cysteine 284/cysteine 377, and cysteine 356/cysteine 369. The 116-residue stretch at 263–378 folds into the C-type lectin domain; that stretch reads FQGNCYFMSN…CNLAKFWICK (116 aa). The Ca(2+) site is built by glutamate 347, asparagine 349, valine 351, glutamate 354, asparagine 365, and aspartate 366.

As to quaternary structure, homotetramer. Interacts with C1QBP; the interaction is indicative for a C1q:C1QBP:CD209 signaling complex. Interacts with ICAM2 and ICAM3 by binding to mannose-like carbohydrates. Interacts (via C-type lectin domain) with CEACAM1 (via Lewis X moieties); this interaction is regulated by the glycosylation pattern of CEACAM1 on cell types and regulates contact between dendritic cells and neutrophils. In terms of assembly, (Microbial infection) Interacts with HIV-1 and HIV-2 gp120. (Microbial infection) Interacts with ebolavirus envelope glycoproteins. As to quaternary structure, (Microbial infection) Interacts with cytomegalovirus gB protein. In terms of assembly, (Microbial infection) Interacts with HCV E2 protein. (Microbial infection) Interacts with dengue virus major envelope protein E. As to quaternary structure, (Microbial infection) Interacts with measles hemagglutinin. In terms of assembly, (Microbial infection) Interacts with herpes simplex virus 1 surface proteins. (Microbial infection) Interacts with Influenzavirus A hemagglutinin. As to quaternary structure, (Microbial infection) Interacts with SARS-CoV spike glycoprotein. In terms of assembly, (Microbial infection) Interacts with Japanese encephalitis virus E protein. (Microbial infection) Interacts with Lassa virus Glycoprotein. As to quaternary structure, (Microbial infection) Interacts with marburg virus glycoprotein. In terms of assembly, (Microbial infection) Interacts with Respiratory syncytial virus glycoprotein G. (Microbial infection) Interacts with Rift valley fever virus and uukuniemi virus envelope glycoprotein. As to quaternary structure, (Microbial infection) Interacts with west-nile virus envelope glycoprotein. In terms of assembly, (Microbial infection) Interacts with whole M.bovis cells in a Ca(2+)-dependent and independent manner; in vitro experiments suggest it interacts with CH60.1 (groL1), DnaK, GADPH (gap) and LrpG. In terms of tissue distribution, predominantly expressed in dendritic cells and in DC-residing tissues. Also found in placental macrophages, endothelial cells of placental vascular channels, peripheral blood mononuclear cells, and THP-1 monocytes.

It is found in the cell membrane. Its subcellular location is the secreted. Functionally, pathogen-recognition receptor expressed on the surface of immature dendritic cells (DCs) and involved in initiation of primary immune response. Thought to mediate the endocytosis of pathogens which are subsequently degraded in lysosomal compartments. The receptor returns to the cell membrane surface and the pathogen-derived antigens are presented to resting T-cells via MHC class II proteins to initiate the adaptive immune response. On DCs it is a high affinity receptor for ICAM2 and ICAM3 by binding to mannose-like carbohydrates. May act as a DC rolling receptor that mediates transendothelial migration of DC presursors from blood to tissues by binding endothelial ICAM2. Seems to regulate DC-induced T-cell proliferation by binding to ICAM3 on T-cells in the immunological synapse formed between DC and T-cells. In terms of biological role, (Microbial infection) Acts as an attachment receptor for HIV-1 and HIV-2. Its function is as follows. (Microbial infection) Acts as an attachment receptor for Ebolavirus. Functionally, (Microbial infection) Acts as an attachment receptor for Cytomegalovirus. (Microbial infection) Acts as an attachment receptor for HCV. In terms of biological role, (Microbial infection) Acts as an attachment receptor for Dengue virus. Its function is as follows. (Microbial infection) Acts as an attachment receptor for Measles virus. Functionally, (Microbial infection) Acts as an attachment receptor for Herpes simplex virus 1. (Microbial infection) Acts as an attachment receptor for Influenzavirus A. In terms of biological role, (Microbial infection) Acts as an attachment receptor for SARS-CoV. Its function is as follows. (Microbial infection) Acts as an attachment receptor for Japanese encephalitis virus. Functionally, (Microbial infection) Acts as an attachment receptor for Lassa virus. Acts as an attachment receptor for Marburg virusn. (Microbial infection) Acts as an attachment receptor for Respiratory syncytial virus. In terms of biological role, (Microbial infection) Acts as an attachment receptor for Rift valley fever virus and uukuniemi virus. Its function is as follows. (Microbial infection) Acts as an attachment receptor for West-nile virus. Functionally, (Microbial infection) Probably recognizes in a calcium-dependent manner high mannose N-linked oligosaccharides in a variety of bacterial pathogen antigens, including Leishmania pifanoi LPG, Lewis-x antigen in Helicobacter pylori LPS, mannose in Klebsiella pneumonae LPS, di-mannose and tri-mannose in Mycobacterium tuberculosis ManLAM and Lewis-x antigen in Schistosoma mansoni SEA. Recognition of M.tuberculosis by dendritic cells occurs partially via this molecule. The chain is CD209 antigen (CD209) from Homo sapiens (Human).